We begin with the raw amino-acid sequence, 206 residues long: Large ribosomal subunit protein uL4 (206 aa).

It belongs to the universal ribosomal protein uL4 family. Part of the 50S ribosomal subunit.

Functionally, one of the primary rRNA binding proteins, this protein initially binds near the 5'-end of the 23S rRNA. It is important during the early stages of 50S assembly. It makes multiple contacts with different domains of the 23S rRNA in the assembled 50S subunit and ribosome. In terms of biological role, forms part of the polypeptide exit tunnel. The sequence is that of Large ribosomal subunit protein uL4 from Nitrobacter hamburgensis (strain DSM 10229 / NCIMB 13809 / X14).